Consider the following 345-residue polypeptide: D-alanine--D-alanine ligase (345 aa).

Residues 133–340 (KLYAKERGVK…IDYRYIHQIQ (208 aa)) enclose the ATP-grasp domain. Residue 162–211 (PLIVKPLRLGSSIGVSIAKNRQELDYALDVAFEFDEAALLEPFMQGIKEY) participates in ATP binding. Mg(2+)-binding residues include Asp-284, Glu-296, and Asn-298.

The protein belongs to the D-alanine--D-alanine ligase family. It depends on Mg(2+) as a cofactor. Mn(2+) is required as a cofactor.

The protein resides in the cytoplasm. It carries out the reaction 2 D-alanine + ATP = D-alanyl-D-alanine + ADP + phosphate + H(+). The protein operates within cell wall biogenesis; peptidoglycan biosynthesis. Functionally, cell wall formation. The chain is D-alanine--D-alanine ligase from Wolinella succinogenes (strain ATCC 29543 / DSM 1740 / CCUG 13145 / JCM 31913 / LMG 7466 / NCTC 11488 / FDC 602W) (Vibrio succinogenes).